Reading from the N-terminus, the 53-residue chain is MFIKQFHIGAANLLFCFRERFFRSDRALKSAVRNISVKKGMELTLHAFFIYKI.

This is an uncharacterized protein from Bacillus subtilis (strain 168).